The sequence spans 179 residues: Ribulose bisphosphate carboxylase small subunit, chloroplastic 3 (179 aa).

The transit peptide at 1 to 58 (MASSATMLSSVATAARAAPAQASMVAPFVGLKSASAFPVTQKPATGLSTLPSNGGRVQ) directs the protein to the chloroplast.

This sequence belongs to the RuBisCO small chain family. Heterohexadecamer of 8 large and 8 small subunits.

The protein resides in the plastid. The protein localises to the chloroplast. In terms of biological role, ruBisCO catalyzes two reactions: the carboxylation of D-ribulose 1,5-bisphosphate, the primary event in carbon dioxide fixation, as well as the oxidative fragmentation of the pentose substrate. Both reactions occur simultaneously and in competition at the same active site. Although the small subunit is not catalytic it is essential for maximal activity. This chain is Ribulose bisphosphate carboxylase small subunit, chloroplastic 3, found in Fritillaria agrestis (Stinkbells).